The following is a 647-amino-acid chain: Putative pre-mRNA-splicing factor ATP-dependent RNA helicase C20H4.09 (647 aa).

The Helicase ATP-binding domain maps to 35–199 (LYAVEQNQIT…FGQDKVCTMS (165 aa)). 48–55 (GHTGCGKT) is a binding site for ATP. A DEAH box motif is present at residues 146–149 (DEVH). A Helicase C-terminal domain is found at 219 to 398 (YVDSAIETVI…PLVLFLKGLG (180 aa)).

This sequence belongs to the DEAD box helicase family. DEAH subfamily.

The protein resides in the nucleus. It carries out the reaction ATP + H2O = ADP + phosphate + H(+). In terms of biological role, pre-mRNA processing factor involved in disassembly of spliceosomes after the release of mature mRNA. This Schizosaccharomyces pombe (strain 972 / ATCC 24843) (Fission yeast) protein is Putative pre-mRNA-splicing factor ATP-dependent RNA helicase C20H4.09.